Here is a 423-residue protein sequence, read N- to C-terminus: Alpha-1-antichymotrypsin (423 aa).

The first 23 residues, 1-23 (MERMLPFLALGLLVAGFCPAVLC), serve as a signal peptide directing secretion. 5 N-linked (GlcNAc...) asparagine glycosylation sites follow: Asn-93, Asn-106, Asn-127, Asn-186, and Asn-271. Residues 369 to 394 (GTEASAATAVKITLLSALVDPMTIVR) are RCL.

This sequence belongs to the serpin family. As to quaternary structure, interacts with DNAJC1. Plasma.

The protein localises to the secreted. Although its physiological function is unclear, it can inhibit neutrophil cathepsin G and mast cell chymase, both of which can convert angiotensin-1 to the active angiotensin-2. This Pongo abelii (Sumatran orangutan) protein is Alpha-1-antichymotrypsin (SERPINA3).